Here is a 398-residue protein sequence, read N- to C-terminus: 1-deoxy-D-xylulose 5-phosphate reductoisomerase (398 aa).

Thr10, Gly11, Ser12, Val13, Gly36, Arg37, Asn38, and Asn124 together coordinate NADPH. Lys125 lines the 1-deoxy-D-xylulose 5-phosphate pocket. Glu126 contributes to the NADPH binding site. Asp150 serves as a coordination point for Mn(2+). Positions 151, 152, 186, and 209 each coordinate 1-deoxy-D-xylulose 5-phosphate. Mn(2+) is bound at residue Glu152. Position 215 (Gly215) interacts with NADPH. Residues Ser222, Asn227, Lys228, and Glu231 each coordinate 1-deoxy-D-xylulose 5-phosphate. A Mn(2+)-binding site is contributed by Glu231.

Belongs to the DXR family. Homodimer. Mg(2+) is required as a cofactor. The cofactor is Mn(2+).

The catalysed reaction is 2-C-methyl-D-erythritol 4-phosphate + NADP(+) = 1-deoxy-D-xylulose 5-phosphate + NADPH + H(+). Its pathway is isoprenoid biosynthesis; isopentenyl diphosphate biosynthesis via DXP pathway; isopentenyl diphosphate from 1-deoxy-D-xylulose 5-phosphate: step 1/6. In terms of biological role, catalyzes the NADPH-dependent rearrangement and reduction of 1-deoxy-D-xylulose-5-phosphate (DXP) to 2-C-methyl-D-erythritol 4-phosphate (MEP). This Serratia proteamaculans (strain 568) protein is 1-deoxy-D-xylulose 5-phosphate reductoisomerase.